The chain runs to 479 residues: MENKPSVLTDKYDVGRLLGQGTFAKVYYGRSILTNQSVAIKMIDKEKVMKVGLIEQIKREISVMRIARHPNVVELYEVMATKTRIYFVMEYCKGGELFNKVAKGKLRDDVAWKYFYQLINAVDFCHSREVYHRDIKPENLLLDDNENLKVSDFGLSALADCKRQDGLLHTTCGTPAYVAPEVINRKGYDGTKADIWSCGVVLFVLLAGYLPFHDSNLMEMYRKIGKADFKAPSWFAPEVRRLLCKMLDPNPETRITIARIRESSWFRKGLHMKQKKMEKRVKEINSVEAGTAGTNENGAGPSENGAGPSENGDRVTEENHTDEPTNLNAFDLIALSAGFDLAGLFGDDNKRESRFTSQKPASVIISKLEEVAQRLKLSIRKREAGLFKLERLKEGRKGILSMDAEIFQVTPNFHLVEVKKSNGDTLEYQKLVAEDLRPALSDIVWVWQGEKDELTSQQETEYQQQQQQEQQEQEEPLKF.

The Protein kinase domain maps to 12-266; it reads YDVGRLLGQG…IARIRESSWF (255 aa). ATP-binding positions include 18-26 and K41; that span reads LGQGTFAKV. The active-site Proton acceptor is the D134. Positions 152-181 are activation loop; the sequence is DFGLSALADCKRQDGLLHTTCGTPAYVAPE. A Phosphoserine modification is found at S156. T170 bears the Phosphothreonine mark. Positions 286-323 are disordered; sequence SVEAGTAGTNENGAGPSENGAGPSENGDRVTEENHTDE. Residues 288–300 are compositionally biased toward low complexity; sequence EAGTAGTNENGAG. Residues 311 to 323 are compositionally biased toward basic and acidic residues; it reads NGDRVTEENHTDE. One can recognise an NAF domain in the interval 322 to 346; it reads DEPTNLNAFDLIALSAGFDLAGLFG. Residues 350–379 form a PPI region; sequence KRESRFTSQKPASVIISKLEEVAQRLKLSI. The interval 456-479 is disordered; sequence SQQETEYQQQQQQEQQEQEEPLKF. Residues 457 to 470 show a composition bias toward low complexity; the sequence is QQETEYQQQQQQEQ.

It belongs to the protein kinase superfamily. CAMK Ser/Thr protein kinase family. SNF1 subfamily. In terms of assembly, interacts with CBL4/SOS3. Mn(2+) serves as cofactor. In terms of tissue distribution, mostly expressed in roots.

The enzyme catalyses L-seryl-[protein] + ATP = O-phospho-L-seryl-[protein] + ADP + H(+). The catalysed reaction is L-threonyl-[protein] + ATP = O-phospho-L-threonyl-[protein] + ADP + H(+). In terms of biological role, CIPK serine-threonine protein kinases interact with CBL proteins. Binding of a CBL protein to the regulatory NAF domain of CIPK protein lead to the activation of the kinase in a calcium-dependent manner. The chain is CBL-interacting serine/threonine-protein kinase 10 (CIPK10) from Arabidopsis thaliana (Mouse-ear cress).